Reading from the N-terminus, the 565-residue chain is MELEYESKRPLYIPYAGPILLEFPLLNKGSAFTNDERSHFNLHGLLPEAVETIEEQAERAYRQYQDFKNDDDKHIYLRNIQDTNETLFYRLLEAHLSEMMPIIYTPTVGEACEHFSDIYRRARGLFISYPNREHIDDMLQNATKQNVKVIVVTDGERILGLGDQGIGGMGIPIGKLSLYTACGGISPAYTLPVVLDVGTNNPQRLNDPLYMGWRHPRISGDEYYAFVDEFIQAVKRRWPNVLLQFEDFAQNNATPLLNRYRDELCCFNDDIQGTAAVTLGSLIAASHAAGSQLRDQTVTFLGAGSAGCGIAEQIIAQMISEGLSEEQARARVFMVDRFGLLTDKLPNLLDFQSKLVQKSDALQSWNLTSDSISLQDVVRNAKPTVLIGVSGQPGLFTEELIREMHKHCARPIVMPLSNPTSRVEARPEDIINWTDGAALVATGSPFSPVSYKEKLYPIAQCNNSYIFPGIGLGVLASGAKRVTDGMLMAASRALAQCSPLAQNGEGALLPNIDDIQAVSKTIAMQVGKAAQLQGVAIVTSEEALAKAIEHNYWQPQYRTYKRTSF.

Catalysis depends on Y104, which acts as the Proton donor. R157 contributes to the NAD(+) binding site. K175 functions as the Proton acceptor in the catalytic mechanism. E246, D247, and D270 together coordinate a divalent metal cation. NAD(+) is bound by residues D270 and N418.

This sequence belongs to the malic enzymes family. As to quaternary structure, homotetramer. Mg(2+) serves as cofactor. Requires Mn(2+) as cofactor.

The enzyme catalyses (S)-malate + NAD(+) = pyruvate + CO2 + NADH. It carries out the reaction oxaloacetate + H(+) = pyruvate + CO2. The sequence is that of NAD-dependent malic enzyme from Yersinia enterocolitica serotype O:8 / biotype 1B (strain NCTC 13174 / 8081).